Here is a 360-residue protein sequence, read N- to C-terminus: Photosystem II protein D1 3 (360 aa).

Transmembrane regions (helical) follow at residues 29–46 (YVGW…TATI), 118–133 (HFLL…EWEL), and 142–156 (WIAV…AATA). Position 118 (histidine 118) interacts with chlorophyll a. Pheophytin a is bound at residue tyrosine 126. [CaMn4O5] cluster-binding residues include aspartate 170 and glutamate 189. A helical membrane pass occupies residues 197-218 (FHMLGVAGVFGGALFSAMHGSL). Residue histidine 198 participates in chlorophyll a binding. A quinone contacts are provided by residues histidine 215 and 264–265 (SF). Histidine 215 contacts Fe cation. Residue histidine 272 participates in Fe cation binding. Residues 274–288 (FLAAWPVIGIWFASL) form a helical membrane-spanning segment. Residues histidine 332, glutamate 333, aspartate 342, and alanine 344 each coordinate [CaMn4O5] cluster. Residues 345-360 (AGDQAPVALQAPAING) constitute a propeptide that is removed on maturation.

It belongs to the reaction center PufL/M/PsbA/D family. PSII is composed of 1 copy each of membrane proteins PsbA, PsbB, PsbC, PsbD, PsbE, PsbF, PsbH, PsbI, PsbJ, PsbK, PsbL, PsbM, PsbT, PsbX, PsbY, PsbZ, Psb30/Ycf12, peripheral proteins PsbO, CyanoQ (PsbQ), PsbU, PsbV and a large number of cofactors. It forms dimeric complexes. It depends on The D1/D2 heterodimer binds P680, chlorophylls that are the primary electron donor of PSII, and subsequent electron acceptors. It shares a non-heme iron and each subunit binds pheophytin, quinone, additional chlorophylls, carotenoids and lipids. D1 provides most of the ligands for the Mn4-Ca-O5 cluster of the oxygen-evolving complex (OEC). There is also a Cl(-1) ion associated with D1 and D2, which is required for oxygen evolution. The PSII complex binds additional chlorophylls, carotenoids and specific lipids. as a cofactor. Post-translationally, tyr-161 forms a radical intermediate that is referred to as redox-active TyrZ, YZ or Y-Z. In terms of processing, C-terminally processed by CtpA; processing is essential to allow assembly of the oxygen-evolving complex and thus photosynthetic growth.

The protein localises to the cellular thylakoid membrane. It carries out the reaction 2 a plastoquinone + 4 hnu + 2 H2O = 2 a plastoquinol + O2. Functionally, photosystem II (PSII) is a light-driven water:plastoquinone oxidoreductase that uses light energy to abstract electrons from H(2)O, generating O(2) and a proton gradient subsequently used for ATP formation. It consists of a core antenna complex that captures photons, and an electron transfer chain that converts photonic excitation into a charge separation. The D1/D2 (PsbA/PsbD) reaction center heterodimer binds P680, the primary electron donor of PSII as well as several subsequent electron acceptors. This chain is Photosystem II protein D1 3, found in Picosynechococcus sp. (strain ATCC 27264 / PCC 7002 / PR-6) (Agmenellum quadruplicatum).